The primary structure comprises 764 residues: E3 ubiquitin-protein ligase CBL-B-B (764 aa).

Residues 1–19 are compositionally biased toward low complexity; it reads MASSSSSSSNSSTSSSALS. The tract at residues 1–27 is disordered; the sequence is MASSSSSSSNSSTSSSALSGRLPGARS. The 4H stretch occupies residues 48 to 180; it reads PPKQAAADRR…KAIFPSGQFQ (133 aa). A Cbl-PTB domain is found at 48–356; the sequence is PPKQAAADRR…GRSYNPDLTD (309 aa). Residues 181-253 form an EF-hand-like region; it reads GDTFRITKAD…FEFDIFARLF (73 aa). Residues Asp234, Thr236, Asn238, Tyr240, and Glu245 each coordinate Ca(2+). The SH2-like stretch occupies residues 254–356; the sequence is QPWSSILRNW…GRSYNPDLTD (103 aa). Arg299 lines the 4-O-phospho-L-tyrosine pocket. Positions 357 to 385 are linker; that stretch reads LCEPTPHDHIKVTQEQYELYCEMGSTFQL. An RING-type zinc finger spans residues 386–425; it reads CKICAENDKDVKIEPCGHLMCTSCLTSWQESDGQGCPFCR. Disordered regions lie at residues 482–583 and 707–726; these read MNER…SRTC and KVRN…SSHP. Residues 485-498 are compositionally biased toward polar residues; that stretch reads RQNSPVTSPGSSPL. The segment covering 556–578 has biased composition (pro residues); that stretch reads LPAPPPPLREPPPPPERPPPIPP.

In terms of assembly, interacts with several SH3 domain-containing proteins and with poly-ubiquitinated proteins.

It is found in the cytoplasm. It catalyses the reaction S-ubiquitinyl-[E2 ubiquitin-conjugating enzyme]-L-cysteine + [acceptor protein]-L-lysine = [E2 ubiquitin-conjugating enzyme]-L-cysteine + N(6)-ubiquitinyl-[acceptor protein]-L-lysine.. Its pathway is protein modification; protein ubiquitination. E3 ubiquitin-protein ligase which accepts ubiquitin from specific E2 ubiquitin-conjugating enzymes, and transfers it to substrates, generally promoting their degradation by the proteasome. The polypeptide is E3 ubiquitin-protein ligase CBL-B-B (cblb-b) (Xenopus laevis (African clawed frog)).